An 82-amino-acid polypeptide reads, in one-letter code: U17-hexatoxin-Hi1a (82 aa).

The N-terminal stretch at 1-21 (MKTIFAVTLLLFAIYVPECMP) is a signal peptide. Disulfide bonds link Cys-22–Cys-33, Cys-27–Cys-48, Cys-32–Cys-61, Cys-58–Cys-69, and Cys-63–Cys-75.

As to expression, expressed by the venom gland.

The protein resides in the secreted. Functionally, probable ion channel inhibitor. In Hadronyche infensa (Fraser island funnel-web spider), this protein is U17-hexatoxin-Hi1a.